The sequence spans 426 residues: C4-dicarboxylate transport protein (426 aa).

A run of 8 helical transmembrane segments spans residues 8–28 (VLYV…HFYP), 44–64 (LIKM…IAGM), 78–98 (LLYF…ATHV), 148–168 (GEIL…ATAG), 173–193 (VVTG…RIIT), 222–242 (LIGT…GIIA), 297–317 (GYSF…LFIA), and 355–375 (AATL…ILGI).

This sequence belongs to the dicarboxylate/amino acid:cation symporter (DAACS) (TC 2.A.23) family.

It is found in the cell inner membrane. Responsible for the transport of dicarboxylates such as succinate, fumarate, and malate from the periplasm across the membrane. This Paraburkholderia xenovorans (strain LB400) protein is C4-dicarboxylate transport protein.